The primary structure comprises 50 residues: Mating-type pheromone BAP1(1) (50 aa).

A disordered region spans residues 1-32 (MDGEGHDINIWGARMSPSPAAAPVSATRGAPW). Positions 16–26 (SPSPAAAPVSA) are enriched in low complexity. At Cys-47 the chain carries Cysteine methyl ester. Cys-47 carries S-farnesyl cysteine lipidation. The propeptide at 48–50 (VCH) is removed in mature form.

It is found in the cell membrane. Activates B-regulated development. The chain is Mating-type pheromone BAP1(1) (BAP1(1)) from Schizophyllum commune (Split gill fungus).